Here is a 766-residue protein sequence, read N- to C-terminus: Oligopeptide transporter 7 (766 aa).

The tract at residues 1–58 (MEESEQVLPLLTNPKDLTNPSYASSSSSSSEPRDETEDLLLPISDENEEEEEENSPIR) is disordered. Residues 45-54 (DENEEEEEEN) show a composition bias toward acidic residues. The next 15 helical transmembrane spans lie at 79–99 (MWVL…FFWY), 104–124 (LTIS…LMAA), 154–174 (ITIF…VTVV), 184–204 (FFVS…WAGI), 247–267 (FVIA…LFQI), 287–307 (IGSG…STIS), 324–344 (VGVG…WLDV), 390–410 (LCTF…ATIM), 446–466 (VPEW…IFAC), 477–497 (WWGV…IGII), 509–529 (IITE…NMCF), 561–581 (FMAQ…TAWW), 627–647 (LYKS…LVWL), 676–696 (ATAV…FVVF), and 709–729 (VLSG…YMCL).

This sequence belongs to the oligopeptide OPT transporter (TC 2.A.67.1) family. In terms of tissue distribution, expressed in the major and the first-order veins and in the hydathodes of the leaves. In the roots, expressed in circular zones surrounding lateral root primordia and in some part of the root epidermis. Expressed also in the sepals and the cortical tissues of the stem, but not in the conducting bundles, the petals or the reproductive tissues.

Its subcellular location is the membrane. In terms of biological role, involved in the translocation of tetra- and pentapeptides across the cellular membrane in an energy-dependent manner. May also transport cadmium complexes. This chain is Oligopeptide transporter 7 (OPT7), found in Arabidopsis thaliana (Mouse-ear cress).